The following is a 322-amino-acid chain: NADH-quinone oxidoreductase subunit H (322 aa).

9 consecutive transmembrane segments (helical) span residues 15-35 (FFKV…LSIV), 50-69 (NRVG…KILF), 81-101 (FIFV…IPII), 114-134 (IGIL…LFAG), 149-169 (ACVQ…GVVA), 186-206 (IWNV…GLAV), 237-257 (FFIG…TLFF), 265-285 (IPGC…FILI), and 302-322 (WKFC…LILV).

Belongs to the complex I subunit 1 family. NDH-1 is composed of 13 different subunits. Subunits NuoA, H, J, K, L, M, N constitute the membrane sector of the complex.

Its subcellular location is the cell membrane. It carries out the reaction a quinone + NADH + 5 H(+)(in) = a quinol + NAD(+) + 4 H(+)(out). Its function is as follows. NDH-1 shuttles electrons from NADH, via FMN and iron-sulfur (Fe-S) centers, to quinones in the respiratory chain. The immediate electron acceptor for the enzyme in this species is believed to be ubiquinone. Couples the redox reaction to proton translocation (for every two electrons transferred, four hydrogen ions are translocated across the cytoplasmic membrane), and thus conserves the redox energy in a proton gradient. This subunit may bind ubiquinone. The chain is NADH-quinone oxidoreductase subunit H from Buchnera aphidicola subsp. Acyrthosiphon pisum (strain 5A).